The following is a 1036-amino-acid chain: Histidine kinase 3 (1036 aa).

Over 1–8 (MSLFHVLG) the chain is Extracellular. A helical transmembrane segment spans residues 9–29 (FGVKIGHLFWMLCCWFVSWFV). The Cytoplasmic segment spans residues 30–94 (DNGIEDKSGL…VKFNKAWWRK (65 aa)). Residues 95-115 (LVVVWVVFWVLVSIWTFWYFS) traverse the membrane as a helical segment. The Extracellular segment spans residues 116–399 (SQAMEKRKET…CRFKQKPPWP (284 aa)). Positions 163 to 389 (IPSAIDQRTF…GDPLRKHEMR (227 aa)) constitute a CHASE domain. The helical transmembrane segment at 400–420 (VLSMVTSFGILVIALLVAHII) threads the bilayer. Topologically, residues 421–1036 (HATVSRIHKV…FFNSPSDTES (616 aa)) are cytoplasmic. The Histidine kinase domain occupies 457-723 (TVSHEIRTPM…TFTFTAVFSN (267 aa)). His-460 is subject to Phosphohistidine; by autocatalysis. 2 consecutive Response regulatory domains span residues 746-865 (KAVV…QRGL) and 891-1028 (KILI…SRFF). 4-aspartylphosphate is present on Asp-941.

In terms of assembly, interacts with AHK2, AHK4, AHP1, AHP2, AHP3, AHP5 and At5g43560. In terms of processing, autophosphorylated predominantly on His residues. Activation probably requires a transfer of a phosphate group between a His in the transmitter domain and an Asp of the receiver domain. In terms of tissue distribution, mostly expressed in leaves and flowers, and, to a lower extent, in roots, stems, and siliques, especially in the vascular tissues. Present in seedlings.

It localises to the cell membrane. The protein resides in the endoplasmic reticulum membrane. The catalysed reaction is ATP + protein L-histidine = ADP + protein N-phospho-L-histidine.. Activated by cytokinins to initiate phosphorelay signaling. This cytokinin-mediated activation is repressed by the trans-zeatin antagonists 6-(2-hydroxy-3-methylbenzylamino)purine (PI-55) and 6-(2,5-Dihydroxybenzylamino)purine (LGR-991). Functionally, cytokinins (CK) receptor related to bacterial two-component regulators. Functions as a histidine kinase and transmits the stress signal to a downstream MAPK cascade. This protein undergoes an ATP-dependent autophosphorylation at a conserved histidine residue in the kinase core, and a phosphoryl group is then transferred to a conserved aspartate residue in the receiver domain. In the presence of cytokinin, feeds phosphate to phosphorelay-integrating histidine phosphotransfer protein (HPt) and activates subsequent cascade. Involved in meristems establishment in seedlings. Redundant negative regulator of drought and salt stress responses and abscisic acid (ABA) signaling. Together with AHK2, plays a negative regulatory role in cold stress signaling via inhibition of ABA response, occurring independently of the cold acclimation pathway. Redundant positive regulator of cytokinin signaling that regulates many developmental processes including seed germination, cell division, seed size, chlorophyll retention during leaf senescence, root repression and shoot promotion. Can interact with isoprenoid-type cytokinins trans-zeatin (tZ and tZR), cis-zeatin (cZ), dihydrozeatin (DZ), buta-2,3-dienyladenine (HA-8), penta-2,3-dienyladenine (HA-1), 4-methyl-penta-2,3-dienyladenine (HA-10), 4-hydroxy-2-butynyladenine (RM1), 2-propynyladenine (RM3), 2-butynyladenine (RM6), and cytokinin ribosides and ribotides. Together with AHK4, involved in the cytokinin-dependent responses to Pi starvation and sucrose stresses. Promotes cytokinin-mediated leaf longevity through a specific phosphorylation of the response regulator ARR2. Involved in alkamides (e.g. N-isobutyl decanamide) and N-acylethanolamides (NAE) signaling that control meristematic activity and differentiation processes during plant development. Contributes to vascular bundle formation and secondary growth in a cytokinin-dependent manner, probably by promoting the maintenance of mitotic activity and/or identity of procambial cells. Plays a role in the cytokinin-mediated repression of the iron uptake pathway. Required by the cytokinin-dependent flower development regulation pathway. The sequence is that of Histidine kinase 3 (AHK3) from Arabidopsis thaliana (Mouse-ear cress).